The chain runs to 152 residues: Large ribosomal subunit protein uL13 (152 aa).

The protein belongs to the universal ribosomal protein uL13 family. As to quaternary structure, part of the 50S ribosomal subunit.

In terms of biological role, this protein is one of the early assembly proteins of the 50S ribosomal subunit, although it is not seen to bind rRNA by itself. It is important during the early stages of 50S assembly. The protein is Large ribosomal subunit protein uL13 of Wolbachia pipientis wMel.